We begin with the raw amino-acid sequence, 148 residues long: LTEEQKQEXREAFDLFDTDGSGTIDAKELKVXMXALGFEPKKEEIQKMISDIDKDGSGTIDFEEFLQMMTAKMGERDSREEIMKAFRLFDDDQTGKITFKNLKRVAKELGENLTDEEIQEMIDEADRDGDGEINEEEFFRIMKKTSLF.

4 consecutive EF-hand domains span residues 4 to 39, 40 to 75, 77 to 112, and 113 to 148; these read EQKQ…LGFE, PKKE…KMGE, DSRE…LGEN, and LTDE…TSLF. Ca(2+)-binding residues include D17, D19, S21, T23, E28, D53, D55, S57, T59, and E64. Residues D126, D128, D130, E132, and E137 each contribute to the Ca(2+) site.

The protein belongs to the centrin family. As to expression, ubiquitous.

Functionally, this calcium-binding protein is found in the basal body complexes (the functional homolog of the centrosome in animal cell). In mitotic cells it is specifically associated with the poles of the mitotic spindles at the sites of the duplicated basal body complexes. This is Caltractin from Spermatozopsis similis (Green alga).